We begin with the raw amino-acid sequence, 181 residues long: Transcriptional repressor NrdR (181 aa).

Residues 3–34 fold into a zinc finger; it reads CLFCQHTDTRVIDSRVSEDGATIRRRRECEAC. Residues 49–139 form the ATP-cone domain; sequence PVIIKKDGGR…VYRSFQDVAD (91 aa).

Belongs to the NrdR family. The cofactor is Zn(2+).

Its function is as follows. Negatively regulates transcription of bacterial ribonucleotide reductase nrd genes and operons by binding to NrdR-boxes. The chain is Transcriptional repressor NrdR from Xylella fastidiosa (strain M12).